The chain runs to 38 residues: uncharacterized protein (38 aa).

This is an uncharacterized protein from Acidianus two-tailed virus (ATV).